The following is a 354-amino-acid chain: 3'-5' exonuclease (354 aa).

Residues 1-120 form a disordered region; that stretch reads MEKYLIKMPI…PSPEKEKPEK (120 aa). Positions 36 to 50 are enriched in basic and acidic residues; sequence TKKDTPKELKDKENA. The span at 59-70 shows a compositional bias: basic residues; the sequence is TKGRPGRPAVKR. A compositionally biased stretch (basic and acidic residues) spans 71–91; sequence KNLDNPDAKAEKKATEEENPP. Ser-104, Ser-110, and Ser-112 each carry phosphoserine. Residues 146-314 enclose the 3'-5' exonuclease domain; sequence VLQWVEKQKD…GQVIYRELER (169 aa). The Mg(2+) site is built by Asp-163, Glu-165, and Asp-301.

The protein belongs to the WRNexo family.

Its subcellular location is the nucleus. In terms of biological role, has exonuclease activity on both single-stranded and duplex templates bearing overhangs, but not blunt ended duplex DNA, and cleaves in a 3'-5' direction. Essential for the formation of DNA replication focal centers. Has an important role in maintaining genome stability. The protein is 3'-5' exonuclease of Drosophila yakuba (Fruit fly).